Here is a 1020-residue protein sequence, read N- to C-terminus: Probable leucine-rich repeat receptor-like serine/threonine-protein kinase At3g14840 (1020 aa).

An N-terminal signal peptide occupies residues 1-26 (MSLNRQLLFTYYFIVSLILFSDFVSS). At 27–614 (ATLPKEEVDA…GTGGGSSVGT (588 aa)) the chain is on the extracellular side. Asn-50 and Asn-81 each carry an N-linked (GlcNAc...) asparagine glycan. LRR repeat units follow at residues 86–110 (ICHV…LSGL), 111–134 (PFLQ…WGAS), 136–157 (LLNI…LGNL), 158–181 (TTLS…LGNL), 182–204 (PNLK…TFAK), 206–231 (TTLT…NWKG), 253–276 (LGTL…PLRN), 277–301 (MTSM…LGQN), 302–324 (RKLK…TYSG), and 326–349 (SDVD…MVDQ). Asn-124, Asn-138, and Asn-156 each carry an N-linked (GlcNAc...) asparagine glycan. An N-linked (GlcNAc...) asparagine glycan is attached at Asn-193. N-linked (GlcNAc...) asparagine glycans are attached at residues Asn-276 and Asn-289. Asn-359, Asn-386, Asn-389, Asn-417, Asn-461, Asn-469, and Asn-498 each carry an N-linked (GlcNAc...) asparagine glycan. Residues 479 to 501 (QARLSAISLTYQALCLGKGNYTV) form an LRR 11 repeat. A helical transmembrane segment spans residues 615-635 (VVGSVIASTVFLVLLIGGILW). Residues 636-1020 (WRGCLRPKSQ…LDSAYWNTRT (385 aa)) lie on the Cytoplasmic side of the membrane. Residues 672–949 (FDPANKIGEG…VSMLEGHSTV (278 aa)) form the Protein kinase domain. ATP is bound by residues 678–686 (IGEGGFGPV) and Lys-700. Tyr-745 bears the Phosphotyrosine mark. Residue Asp-798 is the Proton acceptor of the active site. Ser-831 carries the post-translational modification Phosphoserine. A phosphothreonine mark is found at Thr-832 and Thr-837. A Phosphotyrosine modification is found at Tyr-845.

This sequence belongs to the protein kinase superfamily. Ser/Thr protein kinase family.

It is found in the cell membrane. It catalyses the reaction L-seryl-[protein] + ATP = O-phospho-L-seryl-[protein] + ADP + H(+). It carries out the reaction L-threonyl-[protein] + ATP = O-phospho-L-threonyl-[protein] + ADP + H(+). This is Probable leucine-rich repeat receptor-like serine/threonine-protein kinase At3g14840 (LRR-RLK) from Arabidopsis thaliana (Mouse-ear cress).